A 302-amino-acid chain; its full sequence is Pyridoxal 5'-phosphate synthase subunit PdxS (302 aa).

Asp32 lines the D-ribose 5-phosphate pocket. Lys89 serves as the catalytic Schiff-base intermediate with D-ribose 5-phosphate. A D-ribose 5-phosphate-binding site is contributed by Gly161. Arg173 contacts D-glyceraldehyde 3-phosphate. D-ribose 5-phosphate contacts are provided by residues Gly222 and 243–244 (GS). The segment at 276-302 (ASNPGKGMKGEANADLSEGEKLQTRGV) is disordered. Basic and acidic residues predominate over residues 293–302 (EGEKLQTRGV).

Belongs to the PdxS/SNZ family. In terms of assembly, in the presence of PdxT, forms a dodecamer of heterodimers.

The catalysed reaction is aldehydo-D-ribose 5-phosphate + D-glyceraldehyde 3-phosphate + L-glutamine = pyridoxal 5'-phosphate + L-glutamate + phosphate + 3 H2O + H(+). It functions in the pathway cofactor biosynthesis; pyridoxal 5'-phosphate biosynthesis. Its function is as follows. Catalyzes the formation of pyridoxal 5'-phosphate from ribose 5-phosphate (RBP), glyceraldehyde 3-phosphate (G3P) and ammonia. The ammonia is provided by the PdxT subunit. Can also use ribulose 5-phosphate and dihydroxyacetone phosphate as substrates, resulting from enzyme-catalyzed isomerization of RBP and G3P, respectively. The protein is Pyridoxal 5'-phosphate synthase subunit PdxS of Haloquadratum walsbyi (strain DSM 16790 / HBSQ001).